We begin with the raw amino-acid sequence, 93 residues long: Phosphoribosyl-ATP pyrophosphatase (93 aa).

This sequence belongs to the PRA-PH family.

It is found in the cytoplasm. It catalyses the reaction 1-(5-phospho-beta-D-ribosyl)-ATP + H2O = 1-(5-phospho-beta-D-ribosyl)-5'-AMP + diphosphate + H(+). The protein operates within amino-acid biosynthesis; L-histidine biosynthesis; L-histidine from 5-phospho-alpha-D-ribose 1-diphosphate: step 2/9. The chain is Phosphoribosyl-ATP pyrophosphatase from Mycobacterium leprae (strain Br4923).